A 207-amino-acid chain; its full sequence is MPTKTVRCLRLLPLASLLLAACSVNQPTQTGKSPTSPEWQKHQQKVQQLTQYQTRGAFAYISDSKRVSANFFWQDTPPQRYRLLLTNPLGSTELELRAQPDGVQITDNQGKRYVGKDAEYMIQQLTGMAIPLNNLRQWILGIPGDATEFTLDERYLLKTITYRQGNQNWDVSYQSYNTELTPPLPTSLELVQGEQRIKLKMNNWMVK.

The signal sequence occupies residues Met-1–Ala-21. Cys-22 is lipidated: N-palmitoyl cysteine. Cys-22 carries the S-diacylglycerol cysteine lipid modification.

Belongs to the LolB family. In terms of assembly, monomer.

Its subcellular location is the cell outer membrane. Its function is as follows. Plays a critical role in the incorporation of lipoproteins in the outer membrane after they are released by the LolA protein. This Pectobacterium atrosepticum (strain SCRI 1043 / ATCC BAA-672) (Erwinia carotovora subsp. atroseptica) protein is Outer-membrane lipoprotein LolB.